A 330-amino-acid polypeptide reads, in one-letter code: MAKPQVTILATGGTIAGSGESSVKSSYSAGAVTVDKLLAAVPAINDLATIKGEQISSIGSQEMTGKVWLKLAKRVNELLAQKETEAVIITHGTDTMEETAFFLNLTVKSQKPVVLVGAMRSGSSMSADGPMNLYNAVNVAINKASTNKGVVIVMNDEIHAAREATKLNTTAVNAFASPNTGKIGTVYYGKVEYFTQSVRPHTLASEFDISKIEELPRVDILYAHPDDTDVLVNAALQAGAKGIIHAGMGNGNPFPLTQNALEKAAKSGVVVARSSRVGSGSTTQEAEVDDKKLGFVATESLNPQKARVLLMLALTKTSDREAIQKIFSTY.

Positions 4–330 constitute an Asparaginase/glutaminase domain; that stretch reads PQVTILATGG…EAIQKIFSTY (327 aa). Catalysis depends on threonine 14, which acts as the O-isoaspartyl threonine intermediate. Residue 93–94 coordinates substrate; the sequence is TD.

This sequence belongs to the asparaginase 1 family. In terms of assembly, homotetramer.

It is found in the cytoplasm. It catalyses the reaction L-asparagine + H2O = L-aspartate + NH4(+). This Wolinella succinogenes (strain ATCC 29543 / DSM 1740 / CCUG 13145 / JCM 31913 / LMG 7466 / NCTC 11488 / FDC 602W) (Vibrio succinogenes) protein is L-asparaginase (ansA).